Here is a 975-residue protein sequence, read N- to C-terminus: Protein bicaudal D homolog 1 (975 aa).

2 coiled-coil regions span residues 1–265 (MAAE…HISI) and 319–496 (SELN…IANE). 5 disordered regions span residues 383–403 (SSKELKAELDGEKGRDSGEEA), 545–616 (RSGS…LDTS), 800–824 (DHEQSRRSKGKLGKSKIGSPKVSGE), 836–877 (LLHS…ASYL), and 922–975 (DCQQ…PPHP). Composition is skewed to basic and acidic residues over residues 385–403 (KELKAELDGEKGRDSGEEA) and 581–590 (VAKESTEASK). The span at 592–602 (PSPTKTPTISP) shows a compositional bias: polar residues. Residues 663-803 (IDKDKEALME…LEDLEFDHEQ (141 aa)) adopt a coiled-coil conformation. An interaction with RAB6A region spans residues 663–803 (IDKDKEALME…LEDLEFDHEQ (141 aa)). A compositionally biased stretch (polar residues) spans 840-877 (QGPQTPNIRVSSGTQRKRQFSPSLCDQSRPRTSGASYL).

It belongs to the BicD family. In terms of assembly, interacts with RAB6A. Interacts (via C-terminus) with RAB6B (GTP-bound); the interaction is direct. Interacts with CLIP-115 and KIFC2. As to quaternary structure, (Microbial infection) Interacts with human cytomegalovirus/HHV-5 protein UL32. In terms of tissue distribution, expressed in the brain, heart and skeletal muscle.

The protein resides in the golgi apparatus. Its function is as follows. Regulates coat complex coatomer protein I (COPI)-independent Golgi-endoplasmic reticulum transport by recruiting the dynein-dynactin motor complex. The polypeptide is Protein bicaudal D homolog 1 (BICD1) (Homo sapiens (Human)).